We begin with the raw amino-acid sequence, 398 residues long: 8-amino-7-oxononanoate synthase (398 aa).

A substrate-binding site is contributed by Arg-26. 113–114 (GF) serves as a coordination point for pyridoxal 5'-phosphate. Residue His-138 coordinates substrate. The pyridoxal 5'-phosphate site is built by Ser-181, His-209, and Thr-238. Position 241 is an N6-(pyridoxal phosphate)lysine (Lys-241). Residue Thr-355 participates in substrate binding.

It belongs to the class-II pyridoxal-phosphate-dependent aminotransferase family. BioF subfamily. As to quaternary structure, homodimer. The cofactor is pyridoxal 5'-phosphate.

The enzyme catalyses 6-carboxyhexanoyl-[ACP] + L-alanine + H(+) = (8S)-8-amino-7-oxononanoate + holo-[ACP] + CO2. Its pathway is cofactor biosynthesis; biotin biosynthesis. Its function is as follows. Catalyzes the decarboxylative condensation of pimeloyl-[acyl-carrier protein] and L-alanine to produce 8-amino-7-oxononanoate (AON), [acyl-carrier protein], and carbon dioxide. This Aeromonas salmonicida (strain A449) protein is 8-amino-7-oxononanoate synthase.